A 492-amino-acid chain; its full sequence is Cholesteryl ester transfer protein (492 aa).

The N-terminal stretch at 1-17 is a signal peptide; it reads MLAVTLLSLALLGSTCA. A disulfide bond links Cys160 and Cys201. Asn257 carries N-linked (GlcNAc...) asparagine glycosylation.

Belongs to the BPI/LBP/Plunc superfamily. BPI/LBP family.

Its subcellular location is the secreted. The catalysed reaction is cholesteryl (9Z-octadecenoate)(in) = cholesteryl (9Z-octadecenoate)(out). It catalyses the reaction 1,2,3-tri-(9Z-octadecenoyl)-glycerol(in) = 1,2,3-tri-(9Z-octadecenoyl)-glycerol(out). It carries out the reaction cholesteryl (9Z,12Z)-octadecadienoate(in) = cholesteryl (9Z,12Z)-octadecadienoate(out). Involved in the transfer of neutral lipids, including cholesteryl ester and triglyceride, among lipoprotein particles. Allows the net movement of cholesteryl ester from high density lipoproteins/HDL to triglyceride-rich very low density lipoproteins/VLDL, and the equimolar transport of triglyceride from VLDL to HDL. Regulates the reverse cholesterol transport, by which excess cholesterol is removed from peripheral tissues and returned to the liver for elimination. This is Cholesteryl ester transfer protein from Cricetulus griseus (Chinese hamster).